Consider the following 908-residue polypeptide: Zinc finger and BTB domain-containing protein 41 (908 aa).

The tract at residues 38-59 (TQAPERPTPEAAQRCQELPPSP) is disordered. The BTB domain occupies 89–153 (CDLLIIVEGK…LYTSEFFVYK (65 aa)). The C2H2-type 1 zinc finger occupies 208 to 231 (HQCKFCSRHFCYKKSLENHLAKTH). Basic residues predominate over residues 252 to 261 (RRSKRNRKCP). Residues 252-344 (RRSKRNRKCP…EAGDSAGSIH (93 aa)) are disordered. Acidic residues predominate over residues 267–276 (TSDDEQESGD). Basic and acidic residues predominate over residues 279-296 (DNLHQESSEKERSDRNDS). The segment covering 297 to 336 (EDPGSEYNAEDEELEEEVSDEDSDTEQSDKDNDAEEEPEA) has biased composition (acidic residues). 13 consecutive C2H2-type zinc fingers follow at residues 360 to 382 (LQCPKCDKTFDRIGKYESHTRVH), 388 to 410 (FECDICHQRYSTKSNLTVHRKKH), 421 to 444 (HKCPYCNKLHASKKTLAKHVKRFH), 462 to 484 (WKCDICKKSFTRRPHLEEHMILH), 490 to 513 (FKCTYCEEHFKSRFARLKHQEKFH), 517 to 540 (FPCDICGRQFNDTGNLKRHIECTH), 546 to 568 (WTCFICGKSVRERTTLKEHLRIH), 574 to 596 (HLCSICGQSFRHGSSYRLHLRVH), 602 to 624 (YECDECGKTFIRHDHLTKHKKIH), 630 to 653 (HQCEECGKCFGRRDHLTVHYKSVH), 667 to 689 (HQCDVCKKIFKGKSSLEMHFRTH), 695 to 717 (YKCQICNQSFRIKKTLTKHLVIH), and 723 to 746 (FNCQHCNATFKRKDKLKYHIDHVH).

It localises to the nucleus. Functionally, may be involved in transcriptional regulation. This is Zinc finger and BTB domain-containing protein 41 (Zbtb41) from Mus musculus (Mouse).